We begin with the raw amino-acid sequence, 92 residues long: UPF0250 protein CGSHiEE_03170 (92 aa).

The protein belongs to the UPF0250 family.

The chain is UPF0250 protein CGSHiEE_03170 from Haemophilus influenzae (strain PittEE).